A 1242-amino-acid polypeptide reads, in one-letter code: DNA excision repair protein ERCC-6-like (1242 aa).

Residue S14 is modified to Phosphoserine. Residues 21 to 54 (YLRYVKEAKEATKNGDLEQALKLFNLAKDIFPNE) form a TPR 1 repeat. In terms of domain architecture, Helicase ATP-binding spans 109–277 (SLYRDGRRGG…WSLFDFACQG (169 aa)). 122–129 (DDMGLGKT) contributes to the ATP binding site. The short motif at 228–231 (DEAH) is the DEAH box element. Positions 466–626 (FLMDLLKKLR…PFRYFSKQEL (161 aa)) constitute a Helicase C-terminal domain. Phosphoserine is present on residues S755 and S773. T815 is subject to Phosphothreonine. Phosphoserine occurs at positions 963, 989, 998, and 1021. Position 1055 is a phosphothreonine (T1055). A phosphoserine mark is found at S1061, S1090, and S1110. The disordered stretch occupies residues 1103-1181 (EERLDNSSEA…LSDGQLVDSP (79 aa)). Composition is skewed to basic and acidic residues over residues 1105–1121 (RLDN…HLEE) and 1130–1140 (APEHTKEDPSR). The span at 1141–1156 (ETLSSENKSSQLSTSK) shows a compositional bias: polar residues. Phosphoserine is present on residues S1173 and S1180. Residues 1192–1225 (YDTLVLHGKELKECGKIQEALDCLVKALDIKSSD) form a TPR 2 repeat.

The protein belongs to the SNF2/RAD54 helicase family. As to quaternary structure, interacts with PLK1, which phosphorylates it. Both proteins are mutually dependent on each other for correct subcellular localization. Interacts (via N-terminal TPR repeat) with BEND3 (via BEN domains 1 and 3); the interaction is direct. Phosphorylation by PLK1 prevents the association with chromosome arms and restricts its localization to the kinetochore-centromere region.

It is found in the chromosome. The protein resides in the centromere. The protein localises to the kinetochore. It carries out the reaction ATP + H2O = ADP + phosphate + H(+). Functionally, DNA helicase that acts as a tension sensor that associates with catenated DNA which is stretched under tension until it is resolved during anaphase. Functions as ATP-dependent DNA translocase. Can promote Holliday junction branch migration (in vitro). The protein is DNA excision repair protein ERCC-6-like (ERCC6L) of Bos taurus (Bovine).